The following is a 362-amino-acid chain: Zinc transporter 9 (362 aa).

Positions 1–21 (MAFDLKLTACLLLAVFSLAAA) are cleaved as a signal peptide. At 22-42 (ADCECQPSDEGHDAAKSRTLK) the chain is on the extracellular side. The helical transmembrane segment at 43-63 (VIAIFCILVGSSAGCAIPSLG) threads the bilayer. Over 64–74 (RRFPALRPDTS) the chain is Cytoplasmic. A helical membrane pass occupies residues 75–95 (LFFALKAFAAGVILATAFVHI). Residues 96-120 (LPVSFDKLGSPCLVDGPWRKYPFTG) lie on the Extracellular side of the membrane. Residues 121 to 141 (LVAMLAAVATLLLDTIATGYF) traverse the membrane as a helical segment. At 142–207 (LQRAQDSRGA…EDRAKLVRHR (66 aa)) the chain is on the cytoplasmic side. Residues 208-228 (VISQVFELGIIVHSIIIGISL) traverse the membrane as a helical segment. Topologically, residues 229-239 (GASESPSTIRP) are extracellular. Residues 240–260 (LVAALTFHQFFEGIGLGGCIV) form a helical membrane-spanning segment. Over 261–269 (QARFHLKSA) the chain is Cytoplasmic. The helical transmembrane segment at 270-290 (VTMAIFFSLTTPVGIMIGIGI) threads the bilayer. The Extracellular portion of the chain corresponds to 291–301 (SSAYNENSPTA). Residues 302–322 (LIVEGILDAAAAGILNYMALV) traverse the membrane as a helical segment. The Cytoplasmic portion of the chain corresponds to 323–341 (DLLAEDFMNPRVRKSGRLQ). A helical transmembrane segment spans residues 342–362 (LIISILLLVGIALMSLLGIWA).

The protein belongs to the ZIP transporter (TC 2.A.5) family.

The protein localises to the cell membrane. Functionally, zinc transporter that may be involved in zinc uptake from the rhizosphere. The chain is Zinc transporter 9 (ZIP9) from Oryza sativa subsp. japonica (Rice).